The following is a 362-amino-acid chain: Adenosine deaminase (362 aa).

Zn(2+) contacts are provided by His19 and His21. 3 residues coordinate substrate: His21, Asp23, and Gly181. His208 is a binding site for Zn(2+). Catalysis depends on Glu211, which acts as the Proton donor. Residue Asp300 participates in Zn(2+) binding.

Belongs to the metallo-dependent hydrolases superfamily. Adenosine and AMP deaminases family. Adenosine deaminase subfamily. Zn(2+) serves as cofactor.

The catalysed reaction is adenosine + H2O + H(+) = inosine + NH4(+). It carries out the reaction 2'-deoxyadenosine + H2O + H(+) = 2'-deoxyinosine + NH4(+). Its function is as follows. Catalyzes the hydrolytic deamination of adenosine and 2-deoxyadenosine. The chain is Adenosine deaminase from Mycobacterium marinum (strain ATCC BAA-535 / M).